The following is a 118-amino-acid chain: Hydrogenase maturation factor HypA (118 aa).

Ni(2+) is bound at residue H2. Residues C73, C76, C89, and C92 each coordinate Zn(2+).

Belongs to the HypA/HybF family.

Involved in the maturation of [NiFe] hydrogenases. Required for nickel insertion into the metal center of the hydrogenase. This Shewanella sp. (strain MR-7) protein is Hydrogenase maturation factor HypA.